We begin with the raw amino-acid sequence, 142 residues long: PDZ domain-containing protein 11 (142 aa).

The PDZ domain occupies T49–Y131.

It localises to the cytoplasm. The protein is PDZ domain-containing protein 11 (pdzd11) of Danio rerio (Zebrafish).